Reading from the N-terminus, the 62-residue chain is Ferredoxin-2 (62 aa).

4Fe-4S ferredoxin-type domains follow at residues 2 to 28 (AHRITDECTYCAACEPECPVSAISAGD) and 29 to 62 (SIYVIDENVCVDCIGYHDEPACVAVCPVDCIIKV). [4Fe-4S] cluster-binding residues include C9, C12, C15, C19, C38, C41, C50, and C54.

[4Fe-4S] cluster serves as cofactor.

Its function is as follows. Ferredoxins are iron-sulfur proteins that transfer electrons in a wide variety of metabolic reactions. This chain is Ferredoxin-2, found in Chlorobaculum tepidum (strain ATCC 49652 / DSM 12025 / NBRC 103806 / TLS) (Chlorobium tepidum).